Reading from the N-terminus, the 421-residue chain is Histidine--tRNA ligase (421 aa).

Belongs to the class-II aminoacyl-tRNA synthetase family. As to quaternary structure, homodimer.

Its subcellular location is the cytoplasm. The enzyme catalyses tRNA(His) + L-histidine + ATP = L-histidyl-tRNA(His) + AMP + diphosphate + H(+). The chain is Histidine--tRNA ligase from Caldicellulosiruptor bescii (strain ATCC BAA-1888 / DSM 6725 / KCTC 15123 / Z-1320) (Anaerocellum thermophilum).